A 187-amino-acid polypeptide reads, in one-letter code: UPF0301 protein VF_0434 (187 aa).

This sequence belongs to the UPF0301 (AlgH) family.

This Aliivibrio fischeri (strain ATCC 700601 / ES114) (Vibrio fischeri) protein is UPF0301 protein VF_0434.